The sequence spans 249 residues: UPF0758 protein Oant_1909 (249 aa).

Residues Val127 to Ile249 form the MPN domain. Residues His198, His200, and Asp211 each coordinate Zn(2+). A JAMM motif motif is present at residues His198–Asp211.

Belongs to the UPF0758 family.

The sequence is that of UPF0758 protein Oant_1909 from Brucella anthropi (strain ATCC 49188 / DSM 6882 / CCUG 24695 / JCM 21032 / LMG 3331 / NBRC 15819 / NCTC 12168 / Alc 37) (Ochrobactrum anthropi).